The primary structure comprises 327 residues: Aquaporin-1 (327 aa).

The disordered stretch occupies residues 1–34 (MSSNDSNDTDKQHTRLDPTGVDDAYIPPEQPETK). The Cytoplasmic portion of the chain corresponds to 1 to 48 (MSSNDSNDTDKQHTRLDPTGVDDAYIPPEQPETKHHRFKISRDTLRNH). Residues 49–69 (FIAAVGEFCGTFMFLWCAYVI) traverse the membrane as a helical segment. The Extracellular portion of the chain corresponds to 70–91 (CNVANHDVALVAAPDGSHPGQL). The helical transmembrane segment at 92-112 (IMIAIGFGFSVMFSIWCFAGV) threads the bilayer. Topologically, residues 113-136 (SGGALNPAVSLSLCLARAVSPTRC) are cytoplasmic. The NPA 1 motif lies at 118 to 120 (NPA). Residues 137–157 (VVMWVSQIVAGMAAGGAASAM) traverse the membrane as a helical segment. At 158–176 (TPGEVLFANSLGLGCSRTR) the chain is on the extracellular side. The helical transmembrane segment at 177–197 (GLFLEMFGTAILCLTVLMTAV) threads the bilayer. The Cytoplasmic portion of the chain corresponds to 198–203 (EKRETN). Residues 204–224 (FMAALPIGISLFIAHVALTAY) form a helical membrane-spanning segment. Topologically, residues 225–248 (TGTGVNPARSLGAAVAARYFPHYH) are extracellular. Residues 230 to 232 (NPA) carry the NPA 2 motif. The helical transmembrane segment at 249 to 269 (WIYWIGPLLGSILAWSVWQLL) threads the bilayer. Residues 270–327 (QILDYTTYVTAEKAASTKEKAQKKVKPAVPLLWLKSNFPLLFFISRSLALNVIIFGKN) lie on the Cytoplasmic side of the membrane.

Belongs to the MIP/aquaporin (TC 1.A.8) family.

It is found in the endoplasmic reticulum membrane. The protein resides in the cell membrane. Functionally, water channel required to facilitate the transport of water across membranes. Involved in sporulation, freeze tolerance and osmotolerance. Is non-functional in most laboratory strains. The polypeptide is Aquaporin-1 (AQY1) (Saccharomyces cerevisiae (Baker's yeast)).